We begin with the raw amino-acid sequence, 432 residues long: MAAAKKRTQSDIEDVRDRKAKVIKDSGEKRHIAALILARGGSKGIPLKNIKVLAGVPLIGWVLRAAVDSKQFDSVWVSTDHDDIEKVAKTWGAQVHRRSPEVSKDSSSSLDTIQEFARLNPEVDVICHIQATSPCLHPFHLKEALEMITKQGFTSVFSVVRRHHFRWQEVKKGGSVATQPLNLDPCNRPRRQDWDGELCENGSFYIYTRATIERGLQGGKWAYYEMLPEYSVDIDVDIDWPVAEQRVLRFGYFGLDKPEVVRLLLCNVSGCLTDGRVLISVSGEEMVSVNTRDTMGIRMLQREGVEVILISSSEDLLTKALADNLSQRTGCEVRQLGKDIQGEVIAMMDDKDLDWKEVAYMGNDAPDVDCLNLAGLSAVPRDAPVVAINAAKYSCHSAAGLGAVREFSEHILLLKKKAKSQMEQDRIHRNTF.

Substrate-binding residues include Arg-39, Asn-49, Arg-98, Ser-107, Ser-109, and Gln-130. The active site involves Arg-188.

Belongs to the CMP-NeuNAc synthase family. As to quaternary structure, homotetramer; the active enzyme is formed by a dimer of dimers. As to expression, expressed in testis, ovary and liver.

The protein resides in the nucleus. It catalyses the reaction an N-acylneuraminate + CTP = a CMP-N-acyl-beta-neuraminate + diphosphate. The protein operates within amino-sugar metabolism; N-acetylneuraminate metabolism. Functionally, catalyzes the activation of N-acetylneuraminic acid (NeuNAc) to cytidine 5'-monophosphate N-acetylneuraminic acid (CMP-NeuNAc), a substrate required for the addition of sialic acid. The polypeptide is N-acylneuraminate cytidylyltransferase (cmas) (Oncorhynchus mykiss (Rainbow trout)).